The sequence spans 245 residues: Fibroblast growth factor-binding protein 3 (245 aa).

The N-terminal stretch at 1–28 (MSPPRPRASLSPLTLLLLLGGCLLSAAG) is a signal peptide. The disordered stretch occupies residues 33–52 (AAGREVTRASRPTVGSSGRF). 2 disulfides stabilise this stretch: Cys-60–Cys-81 and Cys-91–Cys-125. Residues 136–216 (CARKTAGSDL…PAAAGFQPNG (81 aa)) are disordered. Positions 170–180 (RSRQSVRSPSS) are enriched in low complexity. Residues Cys-228 and Cys-236 are joined by a disulfide bond.

This sequence belongs to the fibroblast growth factor-binding protein family. In terms of assembly, interacts with FGF2. In the adult, highly expressed in brain with lower levels in ovary. In the embryo, highest levels are found in the brain and spinal cord at 14 dpc and expression is almost completely restricted to the brain by 18 dpc. In the adult and postnatal brain, highly expressed in the orbitofrontal cortex where it is concentrated primarily in differentiated neurons.

The protein localises to the secreted. Heparin-binding protein which binds to FGF2, prevents binding of FGF2 to heparin and probably inhibits immobilization of FGF2 on extracellular matrix glycosaminoglycans, allowing its release and subsequent activation of FGFR signaling which leads to increased vascular permeability. The polypeptide is Fibroblast growth factor-binding protein 3 (Fgfbp3) (Mus musculus (Mouse)).